Consider the following 134-residue polypeptide: Sec-independent protein translocase protein TatB (134 aa).

The chain crosses the membrane as a helical span at residues 2–22; it reads FDGIGFMELLLIGILGLVVLG. A disordered region spans residues 90–134; the sequence is AESVNRPYKVEDTSPVAPKASPDESPSVVEAKSSEATSENSSTPK. Over residues 123–134 the composition is skewed to polar residues; the sequence is SEATSENSSTPK.

The protein belongs to the TatB family. In terms of assembly, the Tat system comprises two distinct complexes: a TatABC complex, containing multiple copies of TatA, TatB and TatC subunits, and a separate TatA complex, containing only TatA subunits. Substrates initially bind to the TatABC complex, which probably triggers association of the separate TatA complex to form the active translocon.

Its subcellular location is the cell inner membrane. Its function is as follows. Part of the twin-arginine translocation (Tat) system that transports large folded proteins containing a characteristic twin-arginine motif in their signal peptide across membranes. Together with TatC, TatB is part of a receptor directly interacting with Tat signal peptides. TatB may form an oligomeric binding site that transiently accommodates folded Tat precursor proteins before their translocation. This chain is Sec-independent protein translocase protein TatB, found in Shewanella frigidimarina (strain NCIMB 400).